Reading from the N-terminus, the 250-residue chain is 3-deoxy-manno-octulosonate cytidylyltransferase (250 aa).

Belongs to the KdsB family.

It localises to the cytoplasm. It carries out the reaction 3-deoxy-alpha-D-manno-oct-2-ulosonate + CTP = CMP-3-deoxy-beta-D-manno-octulosonate + diphosphate. It functions in the pathway nucleotide-sugar biosynthesis; CMP-3-deoxy-D-manno-octulosonate biosynthesis; CMP-3-deoxy-D-manno-octulosonate from 3-deoxy-D-manno-octulosonate and CTP: step 1/1. The protein operates within bacterial outer membrane biogenesis; lipopolysaccharide biosynthesis. In terms of biological role, activates KDO (a required 8-carbon sugar) for incorporation into bacterial lipopolysaccharide in Gram-negative bacteria. In Legionella pneumophila (strain Paris), this protein is 3-deoxy-manno-octulosonate cytidylyltransferase.